Consider the following 297-residue polypeptide: Acetyl-coenzyme A carboxylase carboxyl transferase subunit beta (297 aa).

The segment at 1–23 is disordered; it reads MSWIERILGRTSSSSSSSKSKVP. In terms of domain architecture, CoA carboxyltransferase N-terminal spans 26–295; it reads VWTKCTSCEQ…PFKTAELIVE (270 aa). Zn(2+) contacts are provided by C30, C33, C49, and C52. The C4-type zinc-finger motif lies at 30–52; that stretch reads CTSCEQVLYSEELKRNMHVCPKC.

This sequence belongs to the AccD/PCCB family. In terms of assembly, acetyl-CoA carboxylase is a heterohexamer composed of biotin carboxyl carrier protein (AccB), biotin carboxylase (AccC) and two subunits each of ACCase subunit alpha (AccA) and ACCase subunit beta (AccD). Zn(2+) serves as cofactor.

Its subcellular location is the cytoplasm. The catalysed reaction is N(6)-carboxybiotinyl-L-lysyl-[protein] + acetyl-CoA = N(6)-biotinyl-L-lysyl-[protein] + malonyl-CoA. Its pathway is lipid metabolism; malonyl-CoA biosynthesis; malonyl-CoA from acetyl-CoA: step 1/1. Functionally, component of the acetyl coenzyme A carboxylase (ACC) complex. Biotin carboxylase (BC) catalyzes the carboxylation of biotin on its carrier protein (BCCP) and then the CO(2) group is transferred by the transcarboxylase to acetyl-CoA to form malonyl-CoA. In Actinobacillus pleuropneumoniae serotype 5b (strain L20), this protein is Acetyl-coenzyme A carboxylase carboxyl transferase subunit beta.